The chain runs to 642 residues: Threonine--tRNA ligase (642 aa).

Residues 1 to 63 (MSEIVVTLPD…TDDCELVIVT (63 aa)) enclose the TGS domain. The catalytic stretch occupies residues 242–533 (DHRKLGQELD…LIEHFDGNFP (292 aa)). Zn(2+) contacts are provided by Cys334, His385, and His510.

Belongs to the class-II aminoacyl-tRNA synthetase family. In terms of assembly, homodimer. The cofactor is Zn(2+).

It localises to the cytoplasm. The enzyme catalyses tRNA(Thr) + L-threonine + ATP = L-threonyl-tRNA(Thr) + AMP + diphosphate + H(+). Functionally, catalyzes the attachment of threonine to tRNA(Thr) in a two-step reaction: L-threonine is first activated by ATP to form Thr-AMP and then transferred to the acceptor end of tRNA(Thr). The polypeptide is Threonine--tRNA ligase (Natronomonas pharaonis (strain ATCC 35678 / DSM 2160 / CIP 103997 / JCM 8858 / NBRC 14720 / NCIMB 2260 / Gabara) (Halobacterium pharaonis)).